The chain runs to 332 residues: T-cell surface glycoprotein CD1c1 (332 aa).

A signal peptide spans 1-17; the sequence is MLFLHFLFLDVVLGGSI. At 18–300 the chain is on the extracellular side; the sequence is TENVVQENIS…IILYWGHGLS (283 aa). Asn-25, Asn-38, Asn-75, and Asn-146 each carry an N-linked (GlcNAc...) asparagine glycan. Intrachain disulfides connect Cys-120–Cys-184 and Cys-224–Cys-279. The Ig-like domain maps to 205–292; the sequence is PEVWLSSSPN…HSSLRDQDII (88 aa). A helical transmembrane segment spans residues 301 to 321; it reads VILITFAVIVPLVLLIVLMLL. The Cytoplasmic segment spans residues 322 to 332; it reads YKKRCTYQGIQ.

Heterodimer with B2M (beta-2-microglobulin).

It localises to the cell membrane. Its subcellular location is the endosome membrane. Functionally, antigen-presenting protein that binds self and non-self lipid and glycolipid antigens and presents them to T-cell receptors on natural killer T-cells. The chain is T-cell surface glycoprotein CD1c1 (CD1C1) from Cavia porcellus (Guinea pig).